A 357-amino-acid chain; its full sequence is DNA replication and repair protein RecF (357 aa).

Position 30-37 (30-37) interacts with ATP; sequence GANGSGKT.

The protein belongs to the RecF family.

It is found in the cytoplasm. The RecF protein is involved in DNA metabolism; it is required for DNA replication and normal SOS inducibility. RecF binds preferentially to single-stranded, linear DNA. It also seems to bind ATP. The polypeptide is DNA replication and repair protein RecF (Escherichia coli O6:K15:H31 (strain 536 / UPEC)).